The following is a 211-amino-acid chain: tRNA (guanine-N(7)-)-methyltransferase (211 aa).

Positions 40, 65, 92, and 117 each coordinate S-adenosyl-L-methionine. Asp-117 is an active-site residue. Position 121 (Lys-121) interacts with substrate. The interval 123-128 (RHNKRR) is interaction with RNA. Position 153 (Asp-153) interacts with substrate.

It belongs to the class I-like SAM-binding methyltransferase superfamily. TrmB family.

It catalyses the reaction guanosine(46) in tRNA + S-adenosyl-L-methionine = N(7)-methylguanosine(46) in tRNA + S-adenosyl-L-homocysteine. Its pathway is tRNA modification; N(7)-methylguanine-tRNA biosynthesis. Catalyzes the formation of N(7)-methylguanine at position 46 (m7G46) in tRNA. The sequence is that of tRNA (guanine-N(7)-)-methyltransferase from Synechocystis sp. (strain ATCC 27184 / PCC 6803 / Kazusa).